A 111-amino-acid polypeptide reads, in one-letter code: PCNA-associated factor (111 aa).

Ser8 carries the post-translational modification Phosphoserine. Lys15 participates in a covalent cross-link: Glycyl lysine isopeptide (Lys-Gly) (interchain with G-Cter in ubiquitin). A D-box motif is present at residues 23–34 (RKVLGSSTSATN). The tract at residues 23–111 (RKVLGSSTSA…QPDHTNDEKE (89 aa)) is disordered. Residue Lys24 is modified to N6-acetyllysine; alternate. A Glycyl lysine isopeptide (Lys-Gly) (interchain with G-Cter in ubiquitin); alternate cross-link involves residue Lys24. Phosphoserine is present on residues Ser28, Ser31, and Ser72. The segment covering 28–40 (SSTSATNSTSVSS) has biased composition (low complexity). Residues 62–72 (QKGIGEFFRLS) carry the PIP-box motif. Residues 72–81 (SPKDSEKENQ) are compositionally biased toward basic and acidic residues. A KEN box motif is present at residues 78 to 80 (KEN). Residues 85–97 (EAGSSGLGKAKRK) carry the Initiation motif motif.

Interacts (when monoubiquitinated at Lys-15 and Lys-24) with PCNA. Interacts with isoform 2/p33ING1b of ING1. Interacts with BRCA1. Post-translationally, monoubiquitinated at Lys-15 and Lys-24 during normal S phase, promoting its association with PCNA. Also diubiquitinated at these 2 sites. Following DNA damage, monoubiquitin chains at Lys-15 and Lys-24 are probably extended, leading to disrupt the interaction with PCNA. Polyubiquitinated by the APC/C complex at the mitotic exit, leading to its degradation by the proteasome. In terms of tissue distribution, expressed predominantly in liver, pancreas and placenta. Not detected in heart or brain. Highly expressed in a number of tumors, especially esophageal tumors, in anaplastic thyroid carcinomas, adrenocortical carcinomas, and in non-small-cell lung cancer lines.

It is found in the nucleus. Its subcellular location is the cytoplasm. It localises to the perinuclear region. PCNA-binding protein that acts as a regulator of DNA repair during DNA replication. Following DNA damage, the interaction with PCNA is disrupted, facilitating the interaction between monoubiquitinated PCNA and the translesion DNA synthesis DNA polymerase eta (POLH) at stalled replisomes, facilitating the bypass of replication-fork-blocking lesions. Also acts as a regulator of centrosome number. In Homo sapiens (Human), this protein is PCNA-associated factor.